Reading from the N-terminus, the 197-residue chain is 3-isopropylmalate dehydratase small subunit (197 aa).

It belongs to the LeuD family. LeuD type 1 subfamily. Heterodimer of LeuC and LeuD.

The enzyme catalyses (2R,3S)-3-isopropylmalate = (2S)-2-isopropylmalate. It functions in the pathway amino-acid biosynthesis; L-leucine biosynthesis; L-leucine from 3-methyl-2-oxobutanoate: step 2/4. Catalyzes the isomerization between 2-isopropylmalate and 3-isopropylmalate, via the formation of 2-isopropylmaleate. The sequence is that of 3-isopropylmalate dehydratase small subunit from Streptomyces griseus subsp. griseus (strain JCM 4626 / CBS 651.72 / NBRC 13350 / KCC S-0626 / ISP 5235).